The following is a 265-amino-acid chain: F-box only protein 6 (265 aa).

One can recognise an F-box domain in the interval 3–50; that stretch reads LVSINQLPENILLEVFMHVPARQLLRNCRPVCCLWRDLIDLVSLWKRK. In terms of domain architecture, FBA spans 71-252; the sequence is FYFLCSLRRN…VTNSSVVISH (182 aa). Serine 251 bears the Phosphoserine mark.

Part of a SCF (SKP1-cullin-F-box) protein ligase complex. Interacts with VCP, CHEK1 and CUL1.

Its subcellular location is the cytoplasm. The protein operates within protein modification; protein ubiquitination. Its function is as follows. Substrate-recognition component of some SCF (SKP1-CUL1-F-box protein)-type E3 ubiquitin ligase complexes. Involved in endoplasmic reticulum-associated degradation pathway (ERAD) for misfolded lumenal proteins by recognizing and binding sugar chains on unfolded glycoproteins that are retrotranslocated into the cytosol and promoting their ubiquitination and subsequent degradation. Able to recognize and bind denatured glycoproteins, which are modified with not only high-mannose but also complex-type oligosaccharides. Also recognizes sulfated glycans. Also involved in DNA damage response by specifically recognizing activated CHEK1 (phosphorylated on 'Ser-345'), promoting its ubiquitination and degradation. Ubiquitination of CHEK1 is required to ensure that activated CHEK1 does not accumulate as cells progress through S phase, or when replication forks encounter transient impediments during normal DNA replication. The sequence is that of F-box only protein 6 (FBXO6) from Bos taurus (Bovine).